The chain runs to 135 residues: Endoribonuclease YbeY (135 aa).

Positions 94, 98, and 104 each coordinate Zn(2+).

Belongs to the endoribonuclease YbeY family. Requires Zn(2+) as cofactor.

Its subcellular location is the cytoplasm. Its function is as follows. Single strand-specific metallo-endoribonuclease involved in late-stage 70S ribosome quality control and in maturation of the 3' terminus of the 16S rRNA. This is Endoribonuclease YbeY from Campylobacter jejuni subsp. jejuni serotype O:2 (strain ATCC 700819 / NCTC 11168).